The following is a 497-amino-acid chain: Tryptophan decarboxylase 2 (497 aa).

The pyridoxal 5'-phosphate site is built by alanine 162, serine 163, threonine 257, and asparagine 311. Lysine 314 bears the N6-(pyridoxal phosphate)lysine mark.

This sequence belongs to the group II decarboxylase family. Pyridoxal 5'-phosphate serves as cofactor.

The catalysed reaction is L-tryptophan + H(+) = tryptamine + CO2. Functionally, involved in serotonin biosynthesis. Catalyzes the decarboxylation of L-tryptophan to tryptamine, which is converted to serotonin by tryptamine 5-hydroxylase. May play a minor role in serotonin biosynthetis during senescence. Accumulation of serotonin attenuates leaf senescence. This is Tryptophan decarboxylase 2 from Oryza sativa subsp. japonica (Rice).